Reading from the N-terminus, the 433-residue chain is Methylenetetrahydrofolate--tRNA-(uracil-5-)-methyltransferase TrmFO (433 aa).

Gly8 to Gly13 serves as a coordination point for FAD.

The protein belongs to the MnmG family. TrmFO subfamily. FAD serves as cofactor.

It is found in the cytoplasm. It catalyses the reaction uridine(54) in tRNA + (6R)-5,10-methylene-5,6,7,8-tetrahydrofolate + NADH + H(+) = 5-methyluridine(54) in tRNA + (6S)-5,6,7,8-tetrahydrofolate + NAD(+). The enzyme catalyses uridine(54) in tRNA + (6R)-5,10-methylene-5,6,7,8-tetrahydrofolate + NADPH + H(+) = 5-methyluridine(54) in tRNA + (6S)-5,6,7,8-tetrahydrofolate + NADP(+). Catalyzes the folate-dependent formation of 5-methyl-uridine at position 54 (M-5-U54) in all tRNAs. This Carboxydothermus hydrogenoformans (strain ATCC BAA-161 / DSM 6008 / Z-2901) protein is Methylenetetrahydrofolate--tRNA-(uracil-5-)-methyltransferase TrmFO.